Here is a 378-residue protein sequence, read N- to C-terminus: Queuine tRNA-ribosyltransferase (378 aa).

Asp-89 functions as the Proton acceptor in the catalytic mechanism. Residues 89–93 (DSGGF), Asp-143, Gln-187, and Gly-214 each bind substrate. Positions 245 to 251 (GVGKPQD) are RNA binding. Residue Asp-264 is the Nucleophile of the active site. Positions 269-273 (TRNAR) are RNA binding; important for wobble base 34 recognition. 4 residues coordinate Zn(2+): Cys-302, Cys-304, Cys-307, and His-334.

It belongs to the queuine tRNA-ribosyltransferase family. In terms of assembly, homodimer. Within each dimer, one monomer is responsible for RNA recognition and catalysis, while the other monomer binds to the replacement base PreQ1. It depends on Zn(2+) as a cofactor.

It catalyses the reaction 7-aminomethyl-7-carbaguanine + guanosine(34) in tRNA = 7-aminomethyl-7-carbaguanosine(34) in tRNA + guanine. It participates in tRNA modification; tRNA-queuosine biosynthesis. Catalyzes the base-exchange of a guanine (G) residue with the queuine precursor 7-aminomethyl-7-deazaguanine (PreQ1) at position 34 (anticodon wobble position) in tRNAs with GU(N) anticodons (tRNA-Asp, -Asn, -His and -Tyr). Catalysis occurs through a double-displacement mechanism. The nucleophile active site attacks the C1' of nucleotide 34 to detach the guanine base from the RNA, forming a covalent enzyme-RNA intermediate. The proton acceptor active site deprotonates the incoming PreQ1, allowing a nucleophilic attack on the C1' of the ribose to form the product. After dissociation, two additional enzymatic reactions on the tRNA convert PreQ1 to queuine (Q), resulting in the hypermodified nucleoside queuosine (7-(((4,5-cis-dihydroxy-2-cyclopenten-1-yl)amino)methyl)-7-deazaguanosine). The chain is Queuine tRNA-ribosyltransferase from Blochmanniella floridana.